A 286-amino-acid chain; its full sequence is uncharacterized protein (286 aa).

The protein belongs to the methyltransferase superfamily.

Functionally, involved in osmoadaptation. This is an uncharacterized protein from Emericella nidulans (strain FGSC A4 / ATCC 38163 / CBS 112.46 / NRRL 194 / M139) (Aspergillus nidulans).